Reading from the N-terminus, the 324-residue chain is Nucleotide-binding protein GbCGDNIH1_0395 (324 aa).

14-21 (GLSGAGKS) contacts ATP. GTP is bound at residue 59 to 62 (DARS). The segment at 286 to 324 (ISDDAPQAGAARVSTDDRNGRPEEHGSAQAPDELSRTTS) is disordered. Residues 299-311 (STDDRNGRPEEHG) are compositionally biased toward basic and acidic residues.

This sequence belongs to the RapZ-like family.

In terms of biological role, displays ATPase and GTPase activities. This is Nucleotide-binding protein GbCGDNIH1_0395 from Granulibacter bethesdensis (strain ATCC BAA-1260 / CGDNIH1).